The primary structure comprises 202 residues: GTP-binding protein rho1 (202 aa).

13–20 (GDGACGKT) contacts GTP. The Effector region motif lies at 35–43 (YVPTVFENY). GTP-binding positions include 60-64 (DTAGQ) and 118-121 (CKAD). At Cys-199 the chain carries Cysteine methyl ester. Cys-199 carries the S-geranylgeranyl cysteine lipid modification. Positions 200–202 (ILL) are cleaved as a propeptide — removed in mature form.

The protein belongs to the small GTPase superfamily. Rho family.

Its subcellular location is the cell membrane. Functionally, involved in the regulation of cell wall growth and actin cytoskeleton organization. Activates (1,3)-beta-D-glucan synthase. In Schizosaccharomyces pombe (strain 972 / ATCC 24843) (Fission yeast), this protein is GTP-binding protein rho1 (rho1).